Here is a 130-residue protein sequence, read N- to C-terminus: Small ribosomal subunit protein uS9 (130 aa).

It belongs to the universal ribosomal protein uS9 family.

This chain is Small ribosomal subunit protein uS9, found in Thiobacillus denitrificans (strain ATCC 25259 / T1).